The sequence spans 150 residues: PTS system galactitol-specific EIIA component (150 aa).

The PTS EIIA type-2 domain occupies 1–144 (MTNLFVRSGI…TQLKEYFTKY (144 aa)). The active-site Tele-phosphohistidine intermediate is H62. Position 62 is a phosphohistidine; by HPr (H62).

As to quaternary structure, forms a complex with one each of subunit of GatA, GatB and 2 subunits of GatC.

Its subcellular location is the cytoplasm. Its function is as follows. The phosphoenolpyruvate-dependent sugar phosphotransferase system (sugar PTS), a major carbohydrate active transport system, catalyzes the phosphorylation of incoming sugar substrates concomitantly with their translocation across the cell membrane. The enzyme II complex composed of GatA, GatB and GatC is involved in galactitol transport. This Escherichia coli O157:H7 protein is PTS system galactitol-specific EIIA component (gatA).